A 157-amino-acid polypeptide reads, in one-letter code: Probable calcium-binding protein CML23 (157 aa).

EF-hand domains follow at residues 11 to 46, 47 to 82, 86 to 121, and 122 to 157; these read GSME…LSPN, ASQE…SDQS, SAIR…LGEK, and CSIQ…NGSA. The Ca(2+) site is built by aspartate 24, asparagine 26, aspartate 28, lysine 30, glutamate 35, aspartate 60, aspartate 62, asparagine 64, glutamate 71, aspartate 99, aspartate 101, asparagine 103, arginine 105, glutamate 110, aspartate 135, aspartate 137, aspartate 139, cysteine 141, and glutamate 146.

Its function is as follows. Potential calcium sensor. This is Probable calcium-binding protein CML23 (CML23) from Arabidopsis thaliana (Mouse-ear cress).